A 930-amino-acid chain; its full sequence is F-box only protein 11 (930 aa).

Residues 1-150 (MNSVRAANRR…RVSGKSQDLS (150 aa)) are disordered. The segment covering 7-16 (ANRRPRRVSR) has biased composition (basic residues). Residues 17–27 (PRPVQQQQQQP) show a composition bias toward low complexity. Residues 28–73 (PQQPPPQPPQQQPPPQPPQQPPQQQPPPPPQQQPPPPPPPPPPPPQ) are compositionally biased toward pro residues. A compositionally biased stretch (polar residues) spans 117–132 (PTKSSMEGASTSTTEN). An F-box domain is found at 156–202 (QYLQEKLPDEVVLKIFSYLLEQDLCRAACVCKRFSELANDPILWKRL). 19 PbH1 repeats span residues 398–420 (GACP…YITD), 421–443 (HAQG…WVKN), 444–466 (HGNP…FTFD), 467–489 (HGMG…EVKA), 490–512 (YANP…YVHE), 513–535 (KGRG…WITS), 536–558 (NSDP…YIFG), 559–581 (DGRG…QIRT), 582–604 (NSCP…YVHE), 605–627 (KGQG…WVTT), 628–650 (GSTP…YFYD), 651–673 (NGHG…QIRT), 674–696 (GSNP…LVYN), 697–719 (SGLG…WIKT), 720–742 (DSNP…CIFN), 743–765 (GGRG…LIST), 766–788 (NSHP…EITN), 789–811 (HATA…FLAS), and 812–833 (GVNV…EKAV). The segment at 836–907 (GQCLYKISSY…LSNPCTLAGE (72 aa)) adopts a UBR-type zinc-finger fold.

In terms of assembly, component of the SCF(FBXO11) complex consisting of CUL1, RBX1, SKP1 and FBXO11. Interacts with CIITA. In terms of tissue distribution, at 9.5 dpc and 10.5 dpc, expression is restricted to developing heart tissue. By 11.5 dpc and 12.5 dpc, detected in liver and subsequently in muscle by 13.5 dpc. At 14.5 dpc, still detected in heart, liver and muscle and also in the developing secondary palate including the nasal, medial and oral epithelia of the palatal shelves. At 15.5 dpc and 16.5 dpc, expressed in lung, kidney, heart, liver, muscle and adrenal gland. At this time, fusion of the palate shelves has occurred, with expression confined to the nasal and oral epithelia. At 17.5 dpc, expression in the lung is confined to bronchial epithelial cells and is evident in bone marrow, skin, tissue macrophages, osteoblasts, kidney, liver and spleen. At 18.5 dpc, expressed in bone marrow, liver, kidney and muscle but decreases in heart and lung. At this time, first detected in the middle ear epithelium. At the newborn stage, expression is strong in the middle ear where it is confined to mucin-secreting cells, as well as persisting in bone marrow, kidney and liver. Middle ear expression persists in postnatal head tissue at 4 and 13 days after birth and has declined by 21 days after birth. In the adult, expression is seen in alveolar macrophages of the lung, glomeruli and collecting tubules of the kidney, midbrain, heart and muscle.

Its subcellular location is the nucleus. The protein localises to the chromosome. Its pathway is protein modification; protein ubiquitination. Its function is as follows. Substrate recognition component of a SCF (SKP1-CUL1-F-box protein) E3 ubiquitin-protein ligase complex which mediates the ubiquitination and subsequent proteasomal degradation of target proteins, such as DTL/CDT2, BCL6, SNAI1 and PRDM1/BLIMP1. The SCF(FBXO11) complex mediates ubiquitination and degradation of BCL6, thereby playing a role in the germinal center B-cells terminal differentiation toward memory B-cells and plasma cells. The SCF(FBXO11) complex also mediates ubiquitination and degradation of DTL, an important step for the regulation of TGF-beta signaling, cell migration and the timing of the cell-cycle progression and exit. The SCF(FBXO11) complex also catalyzes ubiquitination and degradation of GSK3B-phosphorylated SNAI1. Binds to and neddylates phosphorylated p53/TP53, inhibiting its transcriptional activity. Plays a role in the regulatiom of erythropoiesis but not myelopoiesis or megakaryopoiesis. Mechanistically, activates erythroid genes by mediating the degradation of BAHD1, a heterochromatin-associated protein that recruits corepressors to H3K27me3 marks. Participates in macrophage cell death and inflammation in response to bacterial toxins by regulating the expression of complement 5a receptor 1/C5AR1 and IL-1beta. Acts as a critical regulator to determine the level of MHC-II by mediating the recognition of degron at the P/S/T domain of CIITA leading to its ubiquitination and subsequent degradation via the proteasome. Participates in the antiviral repsonse by initiating the activation of TBK1-IRF3-IFN-I axis. Mediates the 'Lys-63'-linked ubiquitination of TRAF3 to strengthen the interaction between TRAF3 and TBK1. This Mus musculus (Mouse) protein is F-box only protein 11.